A 264-amino-acid polypeptide reads, in one-letter code: V-type proton ATPase subunit D (264 aa).

Basic and acidic residues predominate over residues 214–230 (RDNAETDAQMKAKKAEQ). The segment at 214–264 (RDNAETDAQMKAKKAEQQRLALADSENAEGEQTENTPADILAAEEDEDVIF) is disordered. Residues 255–264 (AAEEDEDVIF) show a composition bias toward acidic residues.

Belongs to the V-ATPase D subunit family. As to quaternary structure, V-ATPase is a heteromultimeric enzyme composed of a peripheral catalytic V1 complex (components A to H) attached to an integral membrane V0 proton pore complex (components: a, c, c', c'', d, e, f and VOA1).

It is found in the vacuole membrane. Its function is as follows. Subunit of the V1 complex of vacuolar(H+)-ATPase (V-ATPase), a multisubunit enzyme composed of a peripheral complex (V1) that hydrolyzes ATP and a membrane integral complex (V0) that translocates protons. V-ATPase is responsible for acidifying and maintaining the pH of intracellular compartments. This chain is V-type proton ATPase subunit D (vma-8), found in Neurospora crassa (strain ATCC 24698 / 74-OR23-1A / CBS 708.71 / DSM 1257 / FGSC 987).